A 101-amino-acid chain; its full sequence is NAD(P)H-quinone oxidoreductase subunit 4L, chloroplastic (101 aa).

A run of 3 helical transmembrane segments spans residues 2-22, 32-52, and 61-81; these read ILEH…YGLI, MCLE…SDFF, and IFCI…LAIV.

Belongs to the complex I subunit 4L family. In terms of assembly, NDH is composed of at least 16 different subunits, 5 of which are encoded in the nucleus.

The protein localises to the plastid. Its subcellular location is the chloroplast thylakoid membrane. The enzyme catalyses a plastoquinone + NADH + (n+1) H(+)(in) = a plastoquinol + NAD(+) + n H(+)(out). The catalysed reaction is a plastoquinone + NADPH + (n+1) H(+)(in) = a plastoquinol + NADP(+) + n H(+)(out). Functionally, NDH shuttles electrons from NAD(P)H:plastoquinone, via FMN and iron-sulfur (Fe-S) centers, to quinones in the photosynthetic chain and possibly in a chloroplast respiratory chain. The immediate electron acceptor for the enzyme in this species is believed to be plastoquinone. Couples the redox reaction to proton translocation, and thus conserves the redox energy in a proton gradient. The polypeptide is NAD(P)H-quinone oxidoreductase subunit 4L, chloroplastic (Arabidopsis thaliana (Mouse-ear cress)).